A 193-amino-acid polypeptide reads, in one-letter code: uncharacterized protein (193 aa).

This is an uncharacterized protein from Aquifex aeolicus (strain VF5).